The primary structure comprises 152 residues: D-aminoacyl-tRNA deacylase (152 aa).

The Gly-cisPro motif, important for rejection of L-amino acids motif lies at 137 to 138; that stretch reads GP.

The protein belongs to the DTD family. As to quaternary structure, homodimer.

The protein localises to the cytoplasm. It catalyses the reaction glycyl-tRNA(Ala) + H2O = tRNA(Ala) + glycine + H(+). The enzyme catalyses a D-aminoacyl-tRNA + H2O = a tRNA + a D-alpha-amino acid + H(+). Its function is as follows. An aminoacyl-tRNA editing enzyme that deacylates mischarged D-aminoacyl-tRNAs. Also deacylates mischarged glycyl-tRNA(Ala), protecting cells against glycine mischarging by AlaRS. Acts via tRNA-based rather than protein-based catalysis; rejects L-amino acids rather than detecting D-amino acids in the active site. By recycling D-aminoacyl-tRNA to D-amino acids and free tRNA molecules, this enzyme counteracts the toxicity associated with the formation of D-aminoacyl-tRNA entities in vivo and helps enforce protein L-homochirality. This is D-aminoacyl-tRNA deacylase from Methylibium petroleiphilum (strain ATCC BAA-1232 / LMG 22953 / PM1).